The sequence spans 95 residues: Small ribosomal subunit protein uS19 (95 aa).

The disordered stretch occupies residues 76-95 (PTRTFRGHGGKKADKRGKLK). The span at 80–95 (FRGHGGKKADKRGKLK) shows a compositional bias: basic residues.

It belongs to the universal ribosomal protein uS19 family.

Protein S19 forms a complex with S13 that binds strongly to the 16S ribosomal RNA. This Herpetosiphon aurantiacus (strain ATCC 23779 / DSM 785 / 114-95) protein is Small ribosomal subunit protein uS19.